Consider the following 118-residue polypeptide: Large ribosomal subunit protein bL20 (118 aa).

This sequence belongs to the bacterial ribosomal protein bL20 family.

In terms of biological role, binds directly to 23S ribosomal RNA and is necessary for the in vitro assembly process of the 50S ribosomal subunit. It is not involved in the protein synthesizing functions of that subunit. The protein is Large ribosomal subunit protein bL20 of Aliarcobacter butzleri (strain RM4018) (Arcobacter butzleri).